The primary structure comprises 486 residues: Scarecrow-like protein 15 (486 aa).

The tract at residues 1–28 is disordered; that stretch reads MKIPASSPQDTTNNNNNTNSTDSNHLSM. Residues 10–24 are compositionally biased toward low complexity; sequence DTTNNNNNTNSTDSN. The 373-residue stretch at 113–485 folds into the GRAS domain; that stretch reads DSVDNGGFDF…RALVATSAWR (373 aa). The leucine repeat I (LRI) stretch occupies residues 120 to 179; sequence FDFIEDLIRVVDCVESDELQLAQVVLSRLNQRLRSPAGRPLQRAAFYFKEALGSFLTGSN. The tract at residues 198 to 266 is VHIID; that stretch reads IKEYSGISPI…VSGGFLRVTA (69 aa). Positions 232-236 match the VHIID motif; the sequence is VHVVD. A leucine repeat II (LRII) region spans residues 278 to 310; that stretch reads LVKENLTQFAAEMKIRFQIEFVLMKTFEMLSFK. The tract at residues 320–410 is PFYRE; that stretch reads TVVLISPAIF…AFVLRPKISA (91 aa). The interval 413–485 is SAW; the sequence is ETAADRRHTG…RALVATSAWR (73 aa).

The protein belongs to the GRAS family. In terms of tissue distribution, expressed in seedlings, roots, leaves and flowers.

The protein localises to the nucleus. Functionally, probable transcription factor involved in plant development. In Arabidopsis thaliana (Mouse-ear cress), this protein is Scarecrow-like protein 15 (SCL15).